We begin with the raw amino-acid sequence, 368 residues long: tRNA-specific 2-thiouridylase MnmA (368 aa).

ATP is bound by residues 11–18 (GMSGGVDS) and M37. The tract at residues 97 to 99 (NPD) is interaction with target base in tRNA. C102 functions as the Nucleophile in the catalytic mechanism. C102 and C199 are joined by a disulfide. G127 serves as a coordination point for ATP. Residues 149–151 (KDQ) form an interaction with tRNA region. The active-site Cysteine persulfide intermediate is C199. An interaction with tRNA region spans residues 311–312 (RY).

Belongs to the MnmA/TRMU family. As to quaternary structure, interacts with TusE.

The protein resides in the cytoplasm. The catalysed reaction is S-sulfanyl-L-cysteinyl-[protein] + uridine(34) in tRNA + AH2 + ATP = 2-thiouridine(34) in tRNA + L-cysteinyl-[protein] + A + AMP + diphosphate + H(+). In terms of biological role, catalyzes the 2-thiolation of uridine at the wobble position (U34) of tRNA(Lys), tRNA(Glu) and tRNA(Gln), leading to the formation of s(2)U34, the first step of tRNA-mnm(5)s(2)U34 synthesis. Sulfur is provided by IscS, via a sulfur-relay system. Binds ATP and its substrate tRNAs. The protein is tRNA-specific 2-thiouridylase MnmA of Escherichia coli O157:H7.